The primary structure comprises 306 residues: Aspartate carbamoyltransferase catalytic subunit (306 aa).

Positions 55 and 56 each coordinate carbamoyl phosphate. Lysine 84 lines the L-aspartate pocket. 3 residues coordinate carbamoyl phosphate: arginine 105, histidine 133, and glutamine 136. L-aspartate is bound by residues arginine 166 and arginine 227. Positions 265 and 266 each coordinate carbamoyl phosphate.

The protein belongs to the aspartate/ornithine carbamoyltransferase superfamily. ATCase family. Heterododecamer (2C3:3R2) of six catalytic PyrB chains organized as two trimers (C3), and six regulatory PyrI chains organized as three dimers (R2).

The enzyme catalyses carbamoyl phosphate + L-aspartate = N-carbamoyl-L-aspartate + phosphate + H(+). The protein operates within pyrimidine metabolism; UMP biosynthesis via de novo pathway; (S)-dihydroorotate from bicarbonate: step 2/3. Its function is as follows. Catalyzes the condensation of carbamoyl phosphate and aspartate to form carbamoyl aspartate and inorganic phosphate, the committed step in the de novo pyrimidine nucleotide biosynthesis pathway. This Neisseria gonorrhoeae (strain ATCC 700825 / FA 1090) protein is Aspartate carbamoyltransferase catalytic subunit.